The chain runs to 155 residues: Putative pre-16S rRNA nuclease (155 aa).

It belongs to the YqgF nuclease family.

It is found in the cytoplasm. Its function is as follows. Could be a nuclease involved in processing of the 5'-end of pre-16S rRNA. In Wolbachia pipientis wMel, this protein is Putative pre-16S rRNA nuclease.